A 2069-amino-acid polypeptide reads, in one-letter code: Dedicator of cytokinesis protein 9 (2069 aa).

4 positions are modified to phosphoserine: Ser21, Ser32, Ser167, and Ser170. The PH domain occupies 174–281 (GITKHGWLYK…WITILNKILQ (108 aa)). The disordered stretch occupies residues 290–313 (EKRNGDSHEDDEQSKLEGSGSGLD). Phosphoserine occurs at positions 433 and 443. The C2 DOCK-type domain occupies 640–818 (TNHLYVYPKY…PLLKISTHLV (179 aa)). Ser927 and Ser1235 each carry phosphoserine. Position 1241 is a phosphothreonine (Thr1241). Residues 1241-1282 (TPNINSVRNADSRGSLISTDSGNSLPERNSEKSNSLDKHQQS) form a disordered region. A phosphoserine mark is found at Ser1255, Ser1261, and Ser1264. The span at 1255–1267 (SLISTDSGNSLPE) shows a compositional bias: polar residues. Positions 1268 to 1280 (RNSEKSNSLDKHQ) are enriched in basic and acidic residues. Positions 1605–2069 (KSYASTPELR…LSEIMHEQLG (465 aa)) constitute a DOCKER domain. Residues 1693-2069 (DEEASMMEDV…LSEIMHEQLG (377 aa)) form an interaction with CDC42 region. Coiled-coil stretches lie at residues 1948–1982 (IEVA…KLQG) and 2034–2067 (NERL…MHEQ).

It belongs to the DOCK family. As to quaternary structure, homodimer. Interacts preferentially with nucleotide-depleted CDC42. Widely expressed, with highest expression in heart and placenta. Expressed at intermediate level in kidney, brain, lung and skeletal muscle.

The protein resides in the endomembrane system. Guanine nucleotide-exchange factor (GEF) that activates CDC42 by exchanging bound GDP for free GTP. Overexpression induces filopodia formation. The protein is Dedicator of cytokinesis protein 9 of Homo sapiens (Human).